A 226-amino-acid chain; its full sequence is ATP-dependent dethiobiotin synthetase BioD (226 aa).

Position 12-17 (12-17 (DAGKTV)) interacts with ATP. T16 is a Mg(2+) binding site. The active site involves K39. Substrate is bound at residue S43. ATP-binding positions include D47, 108 to 111 (EGVG), 168 to 169 (NC), 200 to 202 (PYL), and N207. Mg(2+)-binding residues include D47 and E108.

Belongs to the dethiobiotin synthetase family. As to quaternary structure, homodimer. The cofactor is Mg(2+).

The protein localises to the cytoplasm. The catalysed reaction is (7R,8S)-7,8-diammoniononanoate + CO2 + ATP = (4R,5S)-dethiobiotin + ADP + phosphate + 3 H(+). The enzyme catalyses (7R,8S)-8-amino-7-(carboxyamino)nonanoate + ATP = (4R,5S)-dethiobiotin + ADP + phosphate + H(+). The protein operates within cofactor biosynthesis; biotin biosynthesis; biotin from 7,8-diaminononanoate: step 1/2. In terms of biological role, catalyzes a mechanistically unusual reaction, the ATP-dependent insertion of CO2 between the N7 and N8 nitrogen atoms of 7,8-diaminopelargonic acid (DAPA, also called 7,8-diammoniononanoate) to form a ureido ring. This cyanobacterium does not encode bioA (which catalyzes the formation of the precursor for this reaction in the cannonical pathway), instead it encodes bioU, which replaces bioA and also performs the first half of the cannonical BioD reaction. Thus in this organism BioD has a different substrate. In Cyanothece sp. (strain PCC 7425 / ATCC 29141), this protein is ATP-dependent dethiobiotin synthetase BioD.